The primary structure comprises 599 residues: Phosphomethylpyrimidine synthase (599 aa).

The segment covering 1–16 (MSAASANSVTNPSAWE) has biased composition (polar residues). 2 disordered regions span residues 1 to 53 (MSAA…PNDP) and 82 to 108 (EDTE…GAAS). Over residues 87 to 100 (YAGRERNLADDGRS) the composition is skewed to basic and acidic residues. Substrate contacts are provided by residues asparagine 192, methionine 221, tyrosine 250, histidine 286, 306–308 (SRG), 347–350 (DGLR), and glutamate 386. Histidine 390 provides a ligand contact to Zn(2+). Tyrosine 413 contributes to the substrate binding site. Residue histidine 454 participates in Zn(2+) binding. Residues cysteine 534, cysteine 537, and cysteine 542 each coordinate [4Fe-4S] cluster.

Belongs to the ThiC family. Requires [4Fe-4S] cluster as cofactor.

It catalyses the reaction 5-amino-1-(5-phospho-beta-D-ribosyl)imidazole + S-adenosyl-L-methionine = 4-amino-2-methyl-5-(phosphooxymethyl)pyrimidine + CO + 5'-deoxyadenosine + formate + L-methionine + 3 H(+). Its pathway is cofactor biosynthesis; thiamine diphosphate biosynthesis. Catalyzes the synthesis of the hydroxymethylpyrimidine phosphate (HMP-P) moiety of thiamine from aminoimidazole ribotide (AIR) in a radical S-adenosyl-L-methionine (SAM)-dependent reaction. This is Phosphomethylpyrimidine synthase from Corynebacterium diphtheriae (strain ATCC 700971 / NCTC 13129 / Biotype gravis).